The chain runs to 182 residues: Peptide methionine sulfoxide reductase MsrA (182 aa).

Cysteine 13 is an active-site residue.

Belongs to the MsrA Met sulfoxide reductase family.

It catalyses the reaction L-methionyl-[protein] + [thioredoxin]-disulfide + H2O = L-methionyl-(S)-S-oxide-[protein] + [thioredoxin]-dithiol. It carries out the reaction [thioredoxin]-disulfide + L-methionine + H2O = L-methionine (S)-S-oxide + [thioredoxin]-dithiol. Functionally, has an important function as a repair enzyme for proteins that have been inactivated by oxidation. Catalyzes the reversible oxidation-reduction of methionine sulfoxide in proteins to methionine. This is Peptide methionine sulfoxide reductase MsrA from Mycobacterium bovis (strain ATCC BAA-935 / AF2122/97).